Here is a 54-residue protein sequence, read N- to C-terminus: Small ribosomal subunit protein uS14 (54 aa).

Cys-19, Cys-22, Cys-37, and Cys-40 together coordinate Zn(2+).

This sequence belongs to the universal ribosomal protein uS14 family. Zinc-binding uS14 subfamily. As to quaternary structure, part of the 30S ribosomal subunit. Requires Zn(2+) as cofactor.

In terms of biological role, binds 16S rRNA, required for the assembly of 30S particles. The chain is Small ribosomal subunit protein uS14 from Sulfolobus acidocaldarius (strain ATCC 33909 / DSM 639 / JCM 8929 / NBRC 15157 / NCIMB 11770).